The sequence spans 214 residues: Vascular endothelial growth factor A (214 aa).

Residues 1–26 (MNFLLSWVHWTLALLLYLHHAKWSQA) form the signal peptide. Cystine bridges form between Cys-51-Cys-93, Cys-82-Cys-127, and Cys-86-Cys-129. The N-linked (GlcNAc...) asparagine glycan is linked to Asn-100. A compositionally biased stretch (basic and acidic residues) spans 131–142 (PKKDRTKPEKKS). Positions 131-159 (PKKDRTKPEKKSVRGKGKGQKRKRKKSRF) are disordered. Residues 143–159 (VRGKGKGQKRKRKKSRF) are compositionally biased toward basic residues.

It belongs to the PDGF/VEGF growth factor family. As to quaternary structure, homodimer; disulfide-linked. Also found as heterodimer with PGF. Interacts with NRP1. Interacts with isoform 2 of BSG. Interacts with CD82; this interaction inhibits VEGFA-mediated signaling pathway. Expressed in the pituitary, in brain, in particularly in supraoptic and paraventricular nuclei and the choroid plexus. Also found abundantly in the corpus luteum of the ovary and in kidney glomeruli. Expressed in the ductal epithelial cells of post-pubertal mammary glands. Expressed in the ductal and alveolar epithelial cells throughout the whole period of gestational evolution, lactation and involution.

It is found in the secreted. In terms of biological role, growth factor active in angiogenesis, vasculogenesis and endothelial cell growth. Induces endothelial cell proliferation, promotes cell migration, inhibits apoptosis and induces permeabilization of blood vessels. Binds to the FLT1/VEGFR1 and KDR/VEGFR2 receptors, heparan sulfate and heparin. May play a role in increasing vascular permeability during lactation, when increased transport of molecules from the blood is required for efficient milk protein synthesis. Binding to NRP1 receptor initiates a signaling pathway needed for motor neuron axon guidance and cell body migration, including for the caudal migration of facial motor neurons from rhombomere 4 to rhombomere 6 during embryonic development. Also binds the DEAR/FBXW7-AS1 receptor. This is Vascular endothelial growth factor A (Vegfa) from Rattus norvegicus (Rat).